The following is a 98-amino-acid chain: Putative membrane protein insertion efficiency factor (98 aa).

The protein belongs to the UPF0161 family.

It localises to the cell inner membrane. Functionally, could be involved in insertion of integral membrane proteins into the membrane. This is Putative membrane protein insertion efficiency factor from Cupriavidus pinatubonensis (strain JMP 134 / LMG 1197) (Cupriavidus necator (strain JMP 134)).